The following is a 1286-amino-acid chain: Ankyrin-repeat and fibronectin type III domain-containing 1 (1286 aa).

2 ANK repeats span residues 274–303 and 311–340; these read QGNEAMFEAVEQQDLDAVQLLLYQYTPEEL and EGLTPLDIAIMTNNVPIARILLRTGARESP. In terms of domain architecture, Fibronectin type-III spans 411-507; sequence VPANACLMVS…TTTPVCASPS (97 aa). The interval 748–755 is highly conserved peptide sequence; that stretch reads GLYLGYLK. A compositionally biased stretch (polar residues) spans 999 to 1011; it reads SSHIDCLPSTSPS. Disordered regions lie at residues 999 to 1032, 1086 to 1106, 1187 to 1207, and 1242 to 1286; these read SSHIDCLPSTSPSPEMHRRKAVSESQPCSDEEGC, KASMGPGQDPQGPGQGPDTDH, AEDPGEAEGPGPVVDGPRGLP, and AGQD…SSML. Positions 1260-1277 are enriched in low complexity; that stretch reads SSLPSSTSSEMSPDPTSP.

Expressed in both the suprachiasmatic nucleus and dorsal medial hypothalamus.

Its function is as follows. May play a role in neuronal function. The chain is Ankyrin-repeat and fibronectin type III domain-containing 1 from Mus musculus (Mouse).